The sequence spans 299 residues: Coenzyme PQQ synthesis protein B (299 aa).

Belongs to the PqqB family.

It functions in the pathway cofactor biosynthesis; pyrroloquinoline quinone biosynthesis. Functionally, may be involved in the transport of PQQ or its precursor to the periplasm. This Methylobacterium radiotolerans (strain ATCC 27329 / DSM 1819 / JCM 2831 / NBRC 15690 / NCIMB 10815 / 0-1) protein is Coenzyme PQQ synthesis protein B.